A 271-amino-acid polypeptide reads, in one-letter code: 3-methyl-2-oxobutanoate hydroxymethyltransferase (271 aa).

Mg(2+) is bound by residues D42 and D86. 3-methyl-2-oxobutanoate-binding positions include D42–S43, D86, and K116. E118 provides a ligand contact to Mg(2+). E185 serves as the catalytic Proton acceptor.

It belongs to the PanB family. As to quaternary structure, homodecamer; pentamer of dimers. It depends on Mg(2+) as a cofactor.

Its subcellular location is the cytoplasm. It catalyses the reaction 3-methyl-2-oxobutanoate + (6R)-5,10-methylene-5,6,7,8-tetrahydrofolate + H2O = 2-dehydropantoate + (6S)-5,6,7,8-tetrahydrofolate. The protein operates within cofactor biosynthesis; (R)-pantothenate biosynthesis; (R)-pantoate from 3-methyl-2-oxobutanoate: step 1/2. Catalyzes the reversible reaction in which hydroxymethyl group from 5,10-methylenetetrahydrofolate is transferred onto alpha-ketoisovalerate to form ketopantoate. In Synechococcus sp. (strain CC9605), this protein is 3-methyl-2-oxobutanoate hydroxymethyltransferase.